Consider the following 162-residue polypeptide: uncharacterized protein (162 aa).

This is an uncharacterized protein from Salmonella typhi.